Consider the following 273-residue polypeptide: Petrobactin import ATP-binding protein FpuD (273 aa).

The 237-residue stretch at 5–241 (LETKRLTLSY…KLVRDVFRME (237 aa)) folds into the ABC transporter domain. Residue 37-44 (GSNGCGKS) participates in ATP binding.

It belongs to the ABC transporter superfamily. The complex is composed of two ATP-binding proteins (FpuD), two transmembrane proteins (FpuB) and a solute-binding protein (FpuA).

It is found in the cell membrane. It carries out the reaction a Fe(III)-siderophore(out) + ATP + H2O = a Fe(III)-siderophore(in) + ADP + phosphate + H(+). In terms of biological role, part of an ABC transporter complex involved in ferric-petrobactin uptake. Probably responsible for energy coupling to the transport system. The polypeptide is Petrobactin import ATP-binding protein FpuD (Bacillus anthracis).